A 261-amino-acid polypeptide reads, in one-letter code: MSTPPANVTTAHVLDLFSLKGKNCVVFGAAKGIGFSIATAFAQAGGNVIITYLTTDPTEKAKKLAEETGVQVHTLKIDISRSDTVEAGVEEIQKIFKEIHVVVANAGMPFRRSVLDSPPHEFEKVMNINTNSVYRVAYYMGKIFKKQGFGNLIATASMSATIVNAPQHIAAYCASKAAVRQLCKALAVEWAEFARINSVSPGYFATDMPGYEFLKQWEPYVPFKRLGLTPELRGTYLYLASNASSFVTGLDLIVDGGYTCL.

NADP(+)-binding residues include Ile-33, Lys-60, Asp-78, and Asn-105. The active-site Proton donor is Ser-157. NADP(+)-binding residues include Tyr-172, Lys-176, and Thr-206. Catalysis depends on Tyr-172, which acts as the Proton acceptor. Lys-176 serves as the catalytic Lowers pKa of active site Tyr.

The protein belongs to the short-chain dehydrogenases/reductases (SDR) family.

Its subcellular location is the cytoplasm. The protein localises to the nucleus. This is an uncharacterized protein from Schizosaccharomyces pombe (strain 972 / ATCC 24843) (Fission yeast).